Reading from the N-terminus, the 352-residue chain is D-arabitol-phosphate dehydrogenase (352 aa).

7 residues coordinate Mn(2+): Cys43, His65, Cys96, Cys99, Cys102, Cys110, and Glu151.

This sequence belongs to the zinc-containing alcohol dehydrogenase family. In terms of assembly, homotetramer. Requires Mn(2+) as cofactor.

The enzyme catalyses D-arabinitol 1-phosphate + NAD(+) = D-xylulose 5-phosphate + NADH + H(+). Its activity is regulated as follows. Inhibited by EDTA, 4-hydroxymercuribenzoic acid (PHMB), mercury and zinc ions at a concentration of 2 mM. Its function is as follows. Involved in the arabitol catabolism via the arabitol phosphate route. Catalyzes only the transformation of D-arabitol 1-phosphate (Arb1P) and D-arabitol 5-phosphate (Arb5P) into D-xylulose 5-phosphate (Xlu5P) and ribulose 5-phosphate, respectively. It can use both NAD and NADP. The polypeptide is D-arabitol-phosphate dehydrogenase (Enterococcus avium (Streptococcus avium)).